A 486-amino-acid polypeptide reads, in one-letter code: 2-hydroxymuconic semialdehyde dehydrogenase (486 aa).

Active-site residues include Glu254 and Cys288.

Belongs to the aldehyde dehydrogenase family.

It catalyses the reaction (2Z,4E)-2-hydroxy-6-oxohexa-2,4-dienoate + NAD(+) + H2O = (2Z,4E)-2-hydroxyhexa-2,4-dienedioate + NADH + 2 H(+). It participates in aromatic compound metabolism; benzoate degradation via hydroxylation. Functionally, 2-hydroxymuconic acid semialdehyde can be converted to 2-hydroxypent-2,4-dienoate either directly by the action of 2-hydroxymuconic semialdehyde hydrolase (HMSH) or by the action of three sequential enzymes, the first of which is HMSD. The polypeptide is 2-hydroxymuconic semialdehyde dehydrogenase (dmpC) (Pseudomonas sp. (strain CF600)).